A 449-amino-acid chain; its full sequence is Histone PARylation factor 1-like (449 aa).

The segment at 3–28 (KEDCKYWDKCYQQNPAHLSKYNHPKK) adopts a CCHC-type zinc-finger fold. The disordered stretch occupies residues 18-93 (AHLSKYNHPK…AKGSYEAETE (76 aa)). 2 stretches are compositionally biased toward basic and acidic residues: residues 28–41 (KQQEHEVDGAEGKK) and 54–69 (EQKKEEQTEPVNKDKS). Ser-72 carries the post-translational modification Phosphoserine. Glu-384 acts as the Proton donor in catalysis.

This sequence belongs to the HPF1 family.

Its subcellular location is the chromosome. The protein resides in the nucleus. Its function is as follows. Cofactor for serine ADP-ribosylation that confers serine specificity on Parp. Switches the amino acid specificity of Parp from aspartate or glutamate to serine residues. Acts by completing the active site of Parp: forms a composite active site composed of residues from HPF1/CG1218 and Parp. In Drosophila melanogaster (Fruit fly), this protein is Histone PARylation factor 1-like.